A 462-amino-acid chain; its full sequence is Light-independent protochlorophyllide reductase subunit N (462 aa).

Positions 24, 49, and 109 each coordinate [4Fe-4S] cluster.

This sequence belongs to the BchN/ChlN family. As to quaternary structure, protochlorophyllide reductase is composed of three subunits; ChlL, ChlN and ChlB. Forms a heterotetramer of two ChlB and two ChlN subunits. [4Fe-4S] cluster serves as cofactor.

It localises to the plastid. Its subcellular location is the chloroplast. The catalysed reaction is chlorophyllide a + oxidized 2[4Fe-4S]-[ferredoxin] + 2 ADP + 2 phosphate = protochlorophyllide a + reduced 2[4Fe-4S]-[ferredoxin] + 2 ATP + 2 H2O. It participates in porphyrin-containing compound metabolism; chlorophyll biosynthesis (light-independent). Its function is as follows. Component of the dark-operative protochlorophyllide reductase (DPOR) that uses Mg-ATP and reduced ferredoxin to reduce ring D of protochlorophyllide (Pchlide) to form chlorophyllide a (Chlide). This reaction is light-independent. The NB-protein (ChlN-ChlB) is the catalytic component of the complex. This chain is Light-independent protochlorophyllide reductase subunit N, found in Pleurastrum terricola (Filamentous green alga).